Consider the following 157-residue polypeptide: MRIGHGYDVHRFGEGDHITLGGVRIPHRFGLLAHSDGDVLLHALSDALLGAAALGDIGKHFPDTDPQFKGADSRALLRHVLAQVQAKGYVVGNVDATIVAQAPKMAPHIERMRALIAADLQVELDQVNVKATTTEKLGFTGREEGIAVHAVALLVRP.

A divalent metal cation-binding residues include Asp8 and His10. 4-CDP-2-C-methyl-D-erythritol 2-phosphate contacts are provided by residues 8-10 (DVH) and 34-35 (HS). His42 is an a divalent metal cation binding site. 4-CDP-2-C-methyl-D-erythritol 2-phosphate-binding positions include 56–58 (DIG), 61–65 (FPDTD), 100–106 (AQAPKMA), 132–135 (TTTE), Phe139, and Arg142.

Belongs to the IspF family. As to quaternary structure, homotrimer. A divalent metal cation is required as a cofactor.

The enzyme catalyses 4-CDP-2-C-methyl-D-erythritol 2-phosphate = 2-C-methyl-D-erythritol 2,4-cyclic diphosphate + CMP. It participates in isoprenoid biosynthesis; isopentenyl diphosphate biosynthesis via DXP pathway; isopentenyl diphosphate from 1-deoxy-D-xylulose 5-phosphate: step 4/6. Functionally, involved in the biosynthesis of isopentenyl diphosphate (IPP) and dimethylallyl diphosphate (DMAPP), two major building blocks of isoprenoid compounds. Catalyzes the conversion of 4-diphosphocytidyl-2-C-methyl-D-erythritol 2-phosphate (CDP-ME2P) to 2-C-methyl-D-erythritol 2,4-cyclodiphosphate (ME-CPP) with a corresponding release of cytidine 5-monophosphate (CMP). In Stutzerimonas stutzeri (strain A1501) (Pseudomonas stutzeri), this protein is 2-C-methyl-D-erythritol 2,4-cyclodiphosphate synthase.